We begin with the raw amino-acid sequence, 131 residues long: Type-5 thionin (131 aa).

Residues Met1 to Gly29 form the signal peptide. Positions Leu67–Asp131 are cleaved as a propeptide — acidic domain.

The protein belongs to the plant thionin (TC 1.C.44) family. Is disulfide-linked. In terms of tissue distribution, developing endosperm.

It is found in the secreted. Its function is as follows. Thionins are small plant proteins which are toxic to animal cells. They seem to exert their toxic effect at the level of the cell membrane. Their precise function is not known. This chain is Type-5 thionin (TTHV), found in Triticum aestivum (Wheat).